Reading from the N-terminus, the 412-residue chain is Peptidase T (412 aa).

Histidine 83 serves as a coordination point for Zn(2+). Residue aspartate 85 is part of the active site. Aspartate 145 contributes to the Zn(2+) binding site. Glutamate 179 acts as the Proton acceptor in catalysis. Glutamate 180, aspartate 202, and histidine 384 together coordinate Zn(2+).

Belongs to the peptidase M20B family. Zn(2+) serves as cofactor.

Its subcellular location is the cytoplasm. It catalyses the reaction Release of the N-terminal residue from a tripeptide.. In terms of biological role, cleaves the N-terminal amino acid of tripeptides. The chain is Peptidase T from Fusobacterium nucleatum subsp. nucleatum (strain ATCC 25586 / DSM 15643 / BCRC 10681 / CIP 101130 / JCM 8532 / KCTC 2640 / LMG 13131 / VPI 4355).